The sequence spans 982 residues: Glycine dehydrogenase (decarboxylating) (982 aa).

N6-(pyridoxal phosphate)lysine is present on lysine 729.

It belongs to the GcvP family. In terms of assembly, the glycine cleavage system is composed of four proteins: P, T, L and H. It depends on pyridoxal 5'-phosphate as a cofactor.

The enzyme catalyses N(6)-[(R)-lipoyl]-L-lysyl-[glycine-cleavage complex H protein] + glycine + H(+) = N(6)-[(R)-S(8)-aminomethyldihydrolipoyl]-L-lysyl-[glycine-cleavage complex H protein] + CO2. In terms of biological role, the glycine cleavage system catalyzes the degradation of glycine. The P protein binds the alpha-amino group of glycine through its pyridoxal phosphate cofactor; CO(2) is released and the remaining methylamine moiety is then transferred to the lipoamide cofactor of the H protein. This chain is Glycine dehydrogenase (decarboxylating), found in Ralstonia nicotianae (strain ATCC BAA-1114 / GMI1000) (Ralstonia solanacearum).